The primary structure comprises 319 residues: Ribonucleoside-diphosphate reductase 2 subunit beta (319 aa).

3 residues coordinate Fe cation: Asp-67, Glu-98, and His-101. Tyr-105 is an active-site residue. Fe cation-binding residues include Glu-158, Glu-192, and His-195.

It belongs to the ribonucleoside diphosphate reductase small chain family. In terms of assembly, tetramer of two alpha and two beta subunits. The cofactor is Fe cation.

It carries out the reaction a 2'-deoxyribonucleoside 5'-diphosphate + [thioredoxin]-disulfide + H2O = a ribonucleoside 5'-diphosphate + [thioredoxin]-dithiol. Provides the precursors necessary for DNA synthesis. Catalyzes the biosynthesis of deoxyribonucleotides from the corresponding ribonucleotides. R2F contains the tyrosyl radical required for catalysis. This is Ribonucleoside-diphosphate reductase 2 subunit beta (nrdF) from Escherichia coli (strain K12).